The sequence spans 394 residues: Elongation factor Tu (394 aa).

Residues 10-204 (KPHINVGTIG…ALDKYIPEPQ (195 aa)) form the tr-type G domain. Residues 19–26 (GHVDHGKT) form a G1 region. 19–26 (GHVDHGKT) provides a ligand contact to GTP. Residue T26 participates in Mg(2+) binding. A G2 region spans residues 60-64 (GITIN). Residues 81–84 (DCPG) are G3. GTP is bound by residues 81–85 (DCPGH) and 136–139 (NKCD). Residues 136-139 (NKCD) form a G4 region. The tract at residues 174–176 (SAL) is G5.

The protein belongs to the TRAFAC class translation factor GTPase superfamily. Classic translation factor GTPase family. EF-Tu/EF-1A subfamily. As to quaternary structure, monomer.

The protein resides in the cytoplasm. The catalysed reaction is GTP + H2O = GDP + phosphate + H(+). In terms of biological role, GTP hydrolase that promotes the GTP-dependent binding of aminoacyl-tRNA to the A-site of ribosomes during protein biosynthesis. This chain is Elongation factor Tu, found in Hamiltonella defensa subsp. Acyrthosiphon pisum (strain 5AT).